The sequence spans 506 residues: Pleckstrin homology domain-containing family D member 1 (506 aa).

One can recognise a PH domain in the interval 28-136 (KVQLYGVLWK…WLEMLQESGK (109 aa)). Residues 146–391 (EAMIKSLEAQ…KVRNKEKEER (246 aa)) adopt a coiled-coil conformation. Omega-N-methylarginine is present on arginine 503.

Belongs to the PLEKHD1 family.

The polypeptide is Pleckstrin homology domain-containing family D member 1 (PLEKHD1) (Homo sapiens (Human)).